The following is a 479-amino-acid chain: Ribosomal RNA small subunit methyltransferase F (479 aa).

S-adenosyl-L-methionine-binding positions include 125-131 (AAAPGSK), Glu-149, Asp-176, and Asp-194. The active-site Nucleophile is the Cys-247.

Belongs to the class I-like SAM-binding methyltransferase superfamily. RsmB/NOP family.

It localises to the cytoplasm. It catalyses the reaction cytidine(1407) in 16S rRNA + S-adenosyl-L-methionine = 5-methylcytidine(1407) in 16S rRNA + S-adenosyl-L-homocysteine + H(+). Its function is as follows. Specifically methylates the cytosine at position 1407 (m5C1407) of 16S rRNA. This chain is Ribosomal RNA small subunit methyltransferase F, found in Shigella boydii serotype 4 (strain Sb227).